The following is a 317-amino-acid chain: Cell division protein FtsX (317 aa).

Over 1-39 (MAIVRHKQPPLRRFMMYWVDHARQAFSSLGELWRNPLAS) the chain is Cytoplasmic. A helical transmembrane segment spans residues 40-60 (LMTLAVLGVSLALPSCFHVLL). The Periplasmic portion of the chain corresponds to 61–188 (KNAEVVEGSW…LQGIMNLLRH (128 aa)). Residues 189-209 (TITGIAVLLLSAVLLIVGNTL) form a helical membrane-spanning segment. Residues 210 to 241 (RLNILNQRSEIEVLKLVGATDAFIHRPFLYTG) lie on the Cytoplasmic side of the membrane. A helical membrane pass occupies residues 242–262 (IWFGVIGGMLAWWLTEVMVIW). At 263 to 280 (SEGVVNELAGLYNSNFRL) the chain is on the periplasmic side. Residues 281–301 (VGMGAVDGINLILLGALLGLI) form a helical membrane-spanning segment. Residues 302 to 317 (ASWFSVHRHIRDIEPS) are Cytoplasmic-facing.

This sequence belongs to the ABC-4 integral membrane protein family. FtsX subfamily. As to quaternary structure, forms a membrane-associated complex with FtsE.

It is found in the cell inner membrane. In terms of biological role, part of the ABC transporter FtsEX involved in cellular division. Encoded in an operon consisting of genes ftsY, ftsE and ftsX. The protein is Cell division protein FtsX of Aeromonas hydrophila.